The sequence spans 341 residues: uncharacterized protein (341 aa).

The disordered stretch occupies residues 125–146; it reads DTVKHNGSGPRPEQASSHVHYS.

This sequence belongs to the cycloisomerase 2 family.

This is an uncharacterized protein from Lactococcus lactis subsp. cremoris (strain MG1363).